Here is a 350-residue protein sequence, read N- to C-terminus: MCRCPPEHHDGRMTSAEVGAAAGGAQAAGPPEWPPGSPQALRQPGRARVAMAALVWLLAGASMSSLNKWIFTVHGFGRPLLLSALHMLVAALACHRGARRPMPGGTRCRVLLLSLTFGTSMACGNVGLRAVPLDLAQLVTTTTPLFTLALSALLLGRRHHPLQLAAMGPLCLGAACSLAGEFRTPPTGCGFLLAATCLRGLKSVQQSALLQEERLDAVTLLYATSLPSFCLLAGAALVLEAGVAPPPTAGDSRLWACILLSCLLSVLYNLASFSLLALTSALTVHVLGNLTVVGNLILSRLLFGSRLSALSYVGIALTLSGMFLYHNCEFVASWAARRGLWRRDQPSKGL.

The segment covering 19–30 (GAAAGGAQAAGP) has biased composition (low complexity). The disordered stretch occupies residues 19 to 42 (GAAAGGAQAAGPPEWPPGSPQALR). 8 consecutive transmembrane segments (helical) span residues 51–71 (MAAL…KWIF), 73–93 (VHGF…AALA), 110–132 (VLLL…RAVP), 135–155 (LAQL…ALLL), 218–238 (VTLL…AALV), 258–278 (ILLS…LLAL), 279–299 (TSAL…LILS), and 312–332 (YVGI…EFVA). In terms of domain architecture, EamA spans 125 to 179 (NVGLRAVPLDLAQLVTTTTPLFTLALSALLLGRRHHPLQLAAMGPLCLGAACSLA).

Belongs to the TPT transporter family. SLC35E subfamily.

Its subcellular location is the membrane. In terms of biological role, putative transporter. The protein is Solute carrier family 35 member E4 (SLC35E4) of Homo sapiens (Human).